We begin with the raw amino-acid sequence, 386 residues long: 17-hydroxy-3-oxo-4-pregnene-20-carboxyl-CoA lyase (386 aa).

The active-site Proton acceptor is Tyr-292. Catalysis depends on Tyr-342, which acts as the Proton donor.

Belongs to the thiolase-like superfamily. As to quaternary structure, homodimer. Interacts with the ChsH1/ChsH2 hydratase via the DUF35 C-terminal region of ChsH2 (ChsH2-DUF35). The ChsH1-ChsH2-Ltp2 protein complex is composed of two protomers that form a heterohexameric structure through the Ltp2 dimerization interface.

It catalyses the reaction 17-hydroxy-3-oxochol-4-en-22-oyl-CoA = androst-4-ene-3,17-dione + propanoyl-CoA. It functions in the pathway steroid metabolism; cholesterol degradation. Functionally, involved in cholesterol side chain degradation. When associated with the ChsH1/ChsH2 hydratase, catalyzes the retroaldol cleavage of 17-hydroxy-3-oxo-4-pregnene-20-carboxyl-CoA (17-HOPC-CoA) produced by the hydratase, forming androst-4-ene-3,17-dione and propionyl-CoA. This chain is 17-hydroxy-3-oxo-4-pregnene-20-carboxyl-CoA lyase, found in Mycobacterium tuberculosis (strain ATCC 25618 / H37Rv).